Consider the following 121-residue polypeptide: Aspartate 1-decarboxylase (121 aa).

Ser25 (schiff-base intermediate with substrate; via pyruvic acid) is an active-site residue. Pyruvic acid (Ser) is present on Ser25. A substrate-binding site is contributed by Thr57. The active-site Proton donor is the Tyr58. Residue 73-75 (GAA) participates in substrate binding.

The protein belongs to the PanD family. As to quaternary structure, heterooctamer of four alpha and four beta subunits. The cofactor is pyruvate. In terms of processing, is synthesized initially as an inactive proenzyme, which is activated by self-cleavage at a specific serine bond to produce a beta-subunit with a hydroxyl group at its C-terminus and an alpha-subunit with a pyruvoyl group at its N-terminus.

The protein resides in the cytoplasm. It carries out the reaction L-aspartate + H(+) = beta-alanine + CO2. The protein operates within cofactor biosynthesis; (R)-pantothenate biosynthesis; beta-alanine from L-aspartate: step 1/1. Functionally, catalyzes the pyruvoyl-dependent decarboxylation of aspartate to produce beta-alanine. In Maricaulis maris (strain MCS10) (Caulobacter maris), this protein is Aspartate 1-decarboxylase.